The primary structure comprises 103 residues: Nucleoid-associated protein CFF8240_0066 (103 aa).

Belongs to the YbaB/EbfC family. Homodimer.

It is found in the cytoplasm. Its subcellular location is the nucleoid. In terms of biological role, binds to DNA and alters its conformation. May be involved in regulation of gene expression, nucleoid organization and DNA protection. This Campylobacter fetus subsp. fetus (strain 82-40) protein is Nucleoid-associated protein CFF8240_0066.